The primary structure comprises 518 residues: DNA-binding protein D-ETS-4 (518 aa).

Disordered stretches follow at residues 74–113 (SQPIQQQQQPTAPYTNPSSHQLIPPPAYPHSAYPSPQSSP) and 152–172 (LPPSPPESNCETPSPRSSCGE). Residues 84–94 (TAPYTNPSSHQ) are compositionally biased toward polar residues. Residues 102–113 (PHSAYPSPQSSP) are compositionally biased toward low complexity. The span at 158–171 (ESNCETPSPRSSCG) shows a compositional bias: polar residues. In terms of domain architecture, PNT spans 258-344 (HAKREADAIC…AQLEIWKMAY (87 aa)). The segment at 393–426 (APLNGSTTSPPATNASNGGTATVKRPNGGRTGGG) is disordered. Positions 396 to 412 (NGSTTSPPATNASNGGT) are enriched in polar residues. A DNA-binding region (ETS) is located at residues 430 to 513 (IHLWQFLKEL…RSQRLVYQFC (84 aa)).

Belongs to the ETS family. As to expression, transient high expression in pole cells during embryonic stages 8-11.

It localises to the nucleus. May have a role in germline development. This is DNA-binding protein D-ETS-4 (Ets98B) from Drosophila melanogaster (Fruit fly).